A 225-amino-acid chain; its full sequence is Uridylate kinase (225 aa).

9 to 10 provides a ligand contact to ATP; that stretch reads GS. Gly43 contributes to the UMP binding site. ATP contacts are provided by Gly44 and Arg48. UMP contacts are provided by residues Asp65 and 113–119; that span reads TEPAHST. 3 residues coordinate ATP: Thr139, Tyr145, and Asp148.

This sequence belongs to the UMP kinase family. As to quaternary structure, homohexamer.

The protein localises to the cytoplasm. The enzyme catalyses UMP + ATP = UDP + ADP. The protein operates within pyrimidine metabolism; CTP biosynthesis via de novo pathway; UDP from UMP (UMPK route): step 1/1. Its activity is regulated as follows. Inhibited by UTP. In terms of biological role, catalyzes the reversible phosphorylation of UMP to UDP. The chain is Uridylate kinase from Methanobrevibacter smithii (strain ATCC 35061 / DSM 861 / OCM 144 / PS).